Here is a 353-residue protein sequence, read N- to C-terminus: Protein RecA (353 aa).

64 to 71 (GPESSGKT) serves as a coordination point for ATP. The segment at 331 to 353 (LEEASAQKEEVPVEDKLFDDELE) is disordered. Over residues 335–346 (SAQKEEVPVEDK) the composition is skewed to basic and acidic residues.

Belongs to the RecA family.

The protein resides in the cytoplasm. Functionally, can catalyze the hydrolysis of ATP in the presence of single-stranded DNA, the ATP-dependent uptake of single-stranded DNA by duplex DNA, and the ATP-dependent hybridization of homologous single-stranded DNAs. It interacts with LexA causing its activation and leading to its autocatalytic cleavage. This chain is Protein RecA, found in Macrococcus caseolyticus (strain JCSC5402) (Macrococcoides caseolyticum).